A 294-amino-acid chain; its full sequence is MAMSSGGSGGGVPEQEDSVLFRRGTGQSDDSDIWDDTALIKAYDKAVASFKHALKNGDICETSGKPKTTPKRKPAKKNKSQKKNTAAPLKQWKVGDKCSAIWSEDGCIYPATIASVDFKRETCVVVYTGYGNREEQNLSDLLSPISEVANNIEQNAQENENESQVSTDESENSRSPGSKSDNIKSKSAPWNSFLPPPPPMPGPRLGPGKPGLKFNGPPPPPPPPPPHLLSCWMPPFPSGPPIIPPPPPICPDSLDDADALGSMLISWYMSGYHTGYYMGFRQNQKEGRCSHSLN.

Gly residues predominate over residues 1 to 12 (MAMSSGGSGGGV). Residues 1 to 32 (MAMSSGGSGGGVPEQEDSVLFRRGTGQSDDSD) are disordered. At Ala2 the chain carries N-acetylalanine. Phosphoserine; by PKA is present on residues Ser4, Ser5, and Ser8. A P1 (binding site for GEMIN2) region spans residues 13–44 (PEQEDSVLFRRGTGQSDDSDIWDDTALIKAYD). Phosphothreonine is present on Thr25. A phosphoserine mark is found at Ser28 and Ser31. Residue Lys51 forms a Glycyl lysine isopeptide (Lys-Gly) (interchain with G-Cter in SUMO2) linkage. The segment at 58-88 (DICETSGKPKTTPKRKPAKKNKSQKKNTAAP) is disordered. Residues 68–82 (TTPKRKPAKKNKSQK) show a composition bias toward basic residues. Phosphothreonine is present on Thr69. Thr85 is subject to Phosphothreonine; by PKA. The Tudor domain occupies 91–151 (QWKVGDKCSA…LSPISEVANN (61 aa)). The interval 97–209 (KCSAIWSEDG…MPGPRLGPGK (113 aa)) is required for interaction with RPP20/POP7. The span at 156-166 (AQENENESQVS) shows a compositional bias: low complexity. Residues 156 to 222 (AQENENESQV…KFNGPPPPPP (67 aa)) are disordered. Position 187 is a phosphoserine; by PKA (Ser187). The span at 194 to 204 (LPPPPPMPGPR) shows a compositional bias: pro residues. A Glycyl lysine isopeptide (Lys-Gly) (interchain with G-Cter in SUMO2) cross-link involves residue Lys209. The P2 (binding site for SM B) stretch occupies residues 240 to 267 (PPIIPPPPPICPDSLDDADALGSMLISW). A required for interaction with SYNCRIP region spans residues 279–294 (GFRQNQKEGRCSHSLN).

It belongs to the SMN family. As to quaternary structure, homooligomer; may form higher order homooligomers in the dimer to octamer range. Part of the core SMN complex that contains SMN1, GEMIN2/SIP1, DDX20/GEMIN3, GEMIN4, GEMIN5, GEMIN6, GEMIN7, GEMIN8 and STRAP/UNRIP. Part of the SMN-Sm complex that contains SMN1, GEMIN2/SIP1, DDX20/GEMIN3, GEMIN4, GEMIN5, GEMIN6, GEMIN7, GEMIN8, STRAP/UNRIP and the Sm proteins SNRPB, SNRPD1, SNRPD2, SNRPD3, SNRPE, SNRPF and SNRPG. Component of an import snRNP complex composed of KPNB1, RNUT1, SMN1 and ZNF259. Interacts with DDX20, FBL, NOLA1, RNUT1, SYNCRIP and with several spliceosomal snRNP core Sm proteins, including SNRPB, SNRPD1, SNRPD2, SNRPD3, SNRPE and ILF3. Interacts with GEMIN2; the interaction is direct. Interacts with GEMIN3; the interaction is direct. Interacts with GEMIN8; the interaction is direct. Interacts with SNRPB; the interaction is direct. Interacts (via Tudor domain) with SNRPD1 (via C-terminus); the interaction is direct. Interacts with SNRPD2; the interaction is direct. Interacts (via Tudor domain) with SNRPD3 (via C-terminus); the interaction is direct. Interacts with SNRPE; the interaction is direct. Interacts with OSTF1, LSM10, LSM11 and RPP20/POP7. Interacts (via C-terminal region) with ZPR1 (via C-terminal region). Interacts (via Tudor domain) with COIL. Interacts with SETX; recruits SETX to POLR2A. Interacts with POLR2A (via the C-terminal domain (CTD)). Interacts with PRMT5. Interacts with XRN2. Interacts (via C-terminus) with FMR1 (via C-terminus); the interaction is direct and occurs in a RNA-independent manner. Interacts (via Tudor domain) with SF3B2 ('Arg-508'-methylated form). Interacts with WRAP53/TCAB1. Interacts (via Tudor domain) with ELAVL4 in an RNA-independent manner; the interaction is required for localization of ELAVL4 to RNA granules. Interacts with FRG1.

It is found in the nucleus. The protein resides in the gem. The protein localises to the cajal body. It localises to the cytoplasm. Its subcellular location is the cytoplasmic granule. It is found in the perikaryon. The protein resides in the cell projection. The protein localises to the neuron projection. It localises to the axon. Its subcellular location is the myofibril. It is found in the sarcomere. The protein resides in the z line. The SMN complex catalyzes the assembly of small nuclear ribonucleoproteins (snRNPs), the building blocks of the spliceosome, and thereby plays an important role in the splicing of cellular pre-mRNAs. Most spliceosomal snRNPs contain a common set of Sm proteins SNRPB, SNRPD1, SNRPD2, SNRPD3, SNRPE, SNRPF and SNRPG that assemble in a heptameric protein ring on the Sm site of the small nuclear RNA to form the core snRNP (Sm core). In the cytosol, the Sm proteins SNRPD1, SNRPD2, SNRPE, SNRPF and SNRPG are trapped in an inactive 6S pICln-Sm complex by the chaperone CLNS1A that controls the assembly of the core snRNP. To assemble core snRNPs, the SMN complex accepts the trapped 5Sm proteins from CLNS1A forming an intermediate. Binding of snRNA inside 5Sm ultimately triggers eviction of the SMN complex, thereby allowing binding of SNRPD3 and SNRPB to complete assembly of the core snRNP. Within the SMN complex, SMN1 acts as a structural backbone and together with GEMIN2 it gathers the Sm complex subunits. Ensures the correct splicing of U12 intron-containing genes that may be important for normal motor and proprioceptive neurons development. Also required for resolving RNA-DNA hybrids created by RNA polymerase II, that form R-loop in transcription terminal regions, an important step in proper transcription termination. May also play a role in the metabolism of small nucleolar ribonucleoprotein (snoRNPs). This is Survival motor neuron protein (SMN1) from Macaca fascicularis (Crab-eating macaque).